Here is a 1141-residue protein sequence, read N- to C-terminus: Sterol regulatory element-binding protein 2 (1141 aa).

A transcriptional activation (acidic) region spans residues 1–50 (MDDSGELGGLETMETLTELGDELTLGDIDEMLQFVSNQVGEFPDLFSEQL). The Cytoplasmic segment spans residues 1–479 (MDDSGELGGL…PPVALGMVDR (479 aa)). The disordered stretch occupies residues 48–144 (EQLCSSFPGS…PQPQPQPQTQ (97 aa)). The segment covering 63–82 (SSGSSGSSSSSSNGRGSSSG) has biased composition (low complexity). Positions 88 to 97 (VQRSFTQVTL) are enriched in polar residues. Positions 98-110 (PSFSPSAASPQAP) are enriched in low complexity. Residues 114-126 (VKVSPTSVPTTPR) are compositionally biased toward polar residues. The tract at residues 237–491 (QQVPVLVQPQ…ILLCVLTFLC (255 aa)) is interaction with LMNA. One can recognise a bHLH domain in the interval 330-380 (ERRTTHNIIEKRYRSSINDKIIELKDLVMGTDAKMHKSGVLRKAIDYIKYL). The tract at residues 380–401 (LQQVNHKLRQENMVLKLANQKN) is leucine-zipper. Residue Lys464 forms a Glycyl lysine isopeptide (Lys-Gly) (interchain with G-Cter in SUMO2) linkage. Residues 480–500 (SRILLCVLTFLCLSFNPLTSL) traverse the membrane as a helical segment. Residues 501–533 (LQWGGAHDSDQHPHSGSGRSVLSFESGSGGWFD) lie on the Lumenal side of the membrane. The helical transmembrane segment at 534–554 (WMMPTLLLWLVNGVIVLSVFV) threads the bilayer. Residues 555-1139 (KLLVHGEPVI…VKLGGGTAIA (585 aa)) lie on the Cytoplasmic side of the membrane. 2 positions are modified to phosphoserine: Ser855 and Ser1098.

Belongs to the SREBP family. As to quaternary structure, forms a tight complex with SCAP, the SCAP-SREBP complex, in the endoplasmic reticulum membrane and the Golgi apparatus. Interacts with PAQR3; the interaction anchors the SCAP-SREBP complex to the Golgi apparatus in low cholesterol conditions. Interacts (via C-terminal domain) with RNF139. In terms of assembly, homodimer; efficient DNA binding of the soluble transcription factor fragment requires dimerization with another bHLH protein. Interacts with LMNA. Post-translationally, processed in the Golgi apparatus, releasing the protein from the membrane. At low cholesterol the SCAP-SREBP complex is recruited into COPII vesicles for export from the endoplasmic reticulum. In the Golgi, complex SREBPs are cleaved sequentially by site-1 (MBTPS1, S1P) and site-2 (MBTPS2, S2P) protease. The first cleavage by site-1 protease occurs within the luminal loop, the second cleavage by site-2 protease occurs within the first transmembrane domain, releasing the transcription factor from the Golgi membrane. Apoptosis triggers cleavage by the cysteine proteases caspase-3 and caspase-7. Cleavage and activation is induced by mediated cholesterol efflux. In terms of processing, phosphorylated by AMPK, leading to suppress protein processing and nuclear translocation, and repress target gene expression. SCAP-free SREBF2 is ubiquitinated by the BCR(ARMC5) complex, leading to its degradation. Post-translationally, ubiquitinated; the nuclear form has a rapid turnover and is rapidly ubiquitinated and degraded by the proteasome in the nucleus. In terms of tissue distribution, ubiquitously expressed in adult and fetal tissues.

The protein resides in the endoplasmic reticulum membrane. It is found in the golgi apparatus membrane. It localises to the cytoplasmic vesicle. Its subcellular location is the COPII-coated vesicle membrane. The protein localises to the nucleus. Activation by cleavage is down-regulated upon activation of SIRT3-dependent PRKAA1/AMPK-alpha signaling cascade which leads to inhibition of ATP-consuming lipogenesis to restore cellular energy balance. In terms of biological role, precursor of the transcription factor form (Processed sterol regulatory element-binding protein 2), which is embedded in the endoplasmic reticulum membrane. Low sterol concentrations promote processing of this form, releasing the transcription factor form that translocates into the nucleus and activates transcription of genes involved in cholesterol biosynthesis. Functionally, key transcription factor that regulates expression of genes involved in cholesterol biosynthesis. Binds to the sterol regulatory element 1 (SRE-1) (5'-ATCACCCCAC-3'). Has dual sequence specificity binding to both an E-box motif (5'-ATCACGTGA-3') and to SRE-1 (5'-ATCACCCCAC-3'). Regulates transcription of genes related to cholesterol synthesis pathway. The sequence is that of Sterol regulatory element-binding protein 2 from Homo sapiens (Human).